A 129-amino-acid chain; its full sequence is Small ribosomal subunit protein uS11 (129 aa).

The protein belongs to the universal ribosomal protein uS11 family. Part of the 30S ribosomal subunit. Interacts with proteins S7 and S18. Binds to IF-3.

In terms of biological role, located on the platform of the 30S subunit, it bridges several disparate RNA helices of the 16S rRNA. Forms part of the Shine-Dalgarno cleft in the 70S ribosome. The chain is Small ribosomal subunit protein uS11 from Chelativorans sp. (strain BNC1).